Consider the following 333-residue polypeptide: MSRSFMIILTIMLIALSLGEVLAAENGYDLIIVRNDDLIDYLIALPYSHLLDIPILPVNPKELDDVTKAQLYSYIQLGRDKILIIGNNNAVSLNVEKELEDMGFKVTRIGGADRTETAEKLALHFYPNGSKLVILASAWDYGSTLAASEFAMEYKCPILLTWENQLSPSALEGIKKLNPKIVILVGFGINETVEKTIEDMGYETYWIGRDIEPPPIETTTTTTPNQTSSSKSFFLGVLVTLMILSPVIVYLWKKREERRSQFLEQFSEKEIEVLRAIIENGGEIKQEELPKIVGYSRPTISRIIQDLEKKGIVEREKSGKTFIVRVIKKIKLD.

A signal peptide spans 1–23 (MSRSFMIILTIMLIALSLGEVLA). Residues 232–252 (SFFLGVLVTLMILSPVIVYLW) form a helical membrane-spanning segment.

Its subcellular location is the membrane. This is an uncharacterized protein from Pyrococcus abyssi (strain GE5 / Orsay).